The chain runs to 153 residues: Protein ElaA (153 aa).

One can recognise an N-acetyltransferase domain in the interval 7–151 (LHHSELSVSQ…PHIGMAREVI (145 aa)).

Belongs to the UPF0039 (ElaA) family.

The polypeptide is Protein ElaA (elaA) (Escherichia coli (strain K12)).